A 245-amino-acid polypeptide reads, in one-letter code: MSLTSIPSLREQQHPLIRQLADCIEEVWHQHLDLSPYHLPAELGYVEGRLEGEKLTIENRCYQTPQFRKMHLELAKVGNMLDILHCVMFPRPEYDLPMFGCDLVGGRGQISAAIADLSPVHLDRTLPESYNSALTSLNTLNFSQPRELPEWGNIFSDFCIFVRPSSPEEEAMFLGRVREFLQVHCQGAIAASPVSAEQKQQILAGQHNYCSKQQQNDKTRRVLEKAFGVDWAENYMTTVLFDLPE.

It belongs to the HY2 family.

It catalyses the reaction (2R,3Z)-phycocyanobilin + 4 oxidized [2Fe-2S]-[ferredoxin] = biliverdin IXalpha + 4 reduced [2Fe-2S]-[ferredoxin] + 4 H(+). Functionally, catalyzes the four-electron reduction of biliverdin IX-alpha (2-electron reduction at both the A and D rings); the reaction proceeds via an isolatable 2-electron intermediate, 181,182-dihydrobiliverdin. Upon overexpression in E.coli with PCB:ferredoxin oxidoreductase, CpeS and either CpcB or PecB permits synthesis of phycocyanin-coupled CpcB or PecB. The chain is Phycocyanobilin:ferredoxin oxidoreductase (pcyA) from Nostoc sp. (strain PCC 7120 / SAG 25.82 / UTEX 2576).